The primary structure comprises 238 residues: MAEPIYRRVLVKLSGEYFAGPQDYGIDQATIDRVAGELIAARSLGIEIAVVIGGGNIFRGVEVSARGVSRTTGDTMGMLATVMNCLALAEALQRHGQKARTLAALMMPEVCELYTRAAAEQTLREGGIALLAAGTGNPYFTTDTAAVLRAAEIGAGAVLKATNVDGVYSADPKLDPNAKRFEKLTHSEALAGGYKVMDATAFALARETSLPIIVFSIAEPGSIGAVLSGAGRATVVAG.

Residue K12–G15 participates in ATP binding. G54 is a UMP binding site. ATP-binding residues include G55 and R59. Residues D74 and T135 to T142 each bind UMP. The ATP site is built by T162, N163, Y168, and D171.

The protein belongs to the UMP kinase family. As to quaternary structure, homohexamer.

Its subcellular location is the cytoplasm. The catalysed reaction is UMP + ATP = UDP + ADP. It participates in pyrimidine metabolism; CTP biosynthesis via de novo pathway; UDP from UMP (UMPK route): step 1/1. With respect to regulation, inhibited by UTP. Functionally, catalyzes the reversible phosphorylation of UMP to UDP. This chain is Uridylate kinase, found in Rhodopseudomonas palustris (strain ATCC BAA-98 / CGA009).